The sequence spans 504 residues: Glycerol kinase (504 aa).

T12 lines the ADP pocket. T12, T13, and S14 together coordinate ATP. T12 contacts sn-glycerol 3-phosphate. R16 is a binding site for ADP. R82, E83, Y134, and D246 together coordinate sn-glycerol 3-phosphate. Residues R82, E83, Y134, D246, and Q247 each coordinate glycerol. 2 residues coordinate ADP: T268 and G312. Residues T268, G312, Q316, and G413 each coordinate ATP. Residues G413 and N417 each coordinate ADP.

This sequence belongs to the FGGY kinase family.

The enzyme catalyses glycerol + ATP = sn-glycerol 3-phosphate + ADP + H(+). The protein operates within polyol metabolism; glycerol degradation via glycerol kinase pathway; sn-glycerol 3-phosphate from glycerol: step 1/1. With respect to regulation, inhibited by fructose 1,6-bisphosphate (FBP). Key enzyme in the regulation of glycerol uptake and metabolism. Catalyzes the phosphorylation of glycerol to yield sn-glycerol 3-phosphate. This is Glycerol kinase from Pseudarthrobacter chlorophenolicus (strain ATCC 700700 / DSM 12829 / CIP 107037 / JCM 12360 / KCTC 9906 / NCIMB 13794 / A6) (Arthrobacter chlorophenolicus).